Consider the following 187-residue polypeptide: Coiled-coil domain-containing protein 201 (187 aa).

2 disordered regions span residues 1–79 (MEPG…PPAT) and 92–159 (KESS…RAAA). Positions 111–131 (LTQRQRQRQQQQQQQESLRAK) form a coiled coil. The span at 147–157 (GRKRRDPKKRA) shows a compositional bias: basic residues.

The chain is Coiled-coil domain-containing protein 201 from Homo sapiens (Human).